A 309-amino-acid polypeptide reads, in one-letter code: Aspartate carbamoyltransferase catalytic subunit (309 aa).

Carbamoyl phosphate-binding residues include arginine 58 and threonine 59. An L-aspartate-binding site is contributed by lysine 86. Residues arginine 108, histidine 136, and glutamine 139 each contribute to the carbamoyl phosphate site. Arginine 169 and arginine 223 together coordinate L-aspartate. 2 residues coordinate carbamoyl phosphate: glycine 264 and proline 265.

The protein belongs to the aspartate/ornithine carbamoyltransferase superfamily. ATCase family. In terms of assembly, heterododecamer (2C3:3R2) of six catalytic PyrB chains organized as two trimers (C3), and six regulatory PyrI chains organized as three dimers (R2).

It carries out the reaction carbamoyl phosphate + L-aspartate = N-carbamoyl-L-aspartate + phosphate + H(+). The protein operates within pyrimidine metabolism; UMP biosynthesis via de novo pathway; (S)-dihydroorotate from bicarbonate: step 2/3. In terms of biological role, catalyzes the condensation of carbamoyl phosphate and aspartate to form carbamoyl aspartate and inorganic phosphate, the committed step in the de novo pyrimidine nucleotide biosynthesis pathway. The protein is Aspartate carbamoyltransferase catalytic subunit of Pelotomaculum thermopropionicum (strain DSM 13744 / JCM 10971 / SI).